The following is a 457-amino-acid chain: UDP-N-acetylmuramate--L-alanine ligase (457 aa).

ATP is bound at residue 118–124 (GTHGKTT).

It belongs to the MurCDEF family.

It is found in the cytoplasm. The catalysed reaction is UDP-N-acetyl-alpha-D-muramate + L-alanine + ATP = UDP-N-acetyl-alpha-D-muramoyl-L-alanine + ADP + phosphate + H(+). It participates in cell wall biogenesis; peptidoglycan biosynthesis. Cell wall formation. This chain is UDP-N-acetylmuramate--L-alanine ligase, found in Clostridium perfringens (strain 13 / Type A).